Reading from the N-terminus, the 465-residue chain is Ubiquitin carboxyl-terminal hydrolase UCH54 (465 aa).

Residues 11–333 (EWCLIESNPC…VRFNIIAVMK (323 aa)) form the UCH catalytic domain. The active-site Nucleophile is C145. H220 serves as the catalytic Proton donor. The disordered stretch occupies residues 244–293 (INADEQNKPNPNNNNNNKDNDNDNNNNNNNNNNNNNNNNNNNNNNNNNNI). Positions 251–292 (KPNPNNNNNNKDNDNDNNNNNNNNNNNNNNNNNNNNNNNNNN) are enriched in low complexity. Residues 432-460 (NFYPFIMSSLNLMAKHKLLKDAYQKEKLK) form the ULD domain.

Belongs to the peptidase C12 family.

The catalysed reaction is Thiol-dependent hydrolysis of ester, thioester, amide, peptide and isopeptide bonds formed by the C-terminal Gly of ubiquitin (a 76-residue protein attached to proteins as an intracellular targeting signal).. Functionally, thiol protease that recognizes and hydrolyzes a peptide bond at the C-terminal glycine of either ubiquitin or NEDD8. The polypeptide is Ubiquitin carboxyl-terminal hydrolase UCH54 (Plasmodium falciparum (isolate 3D7)).